The primary structure comprises 432 residues: Glutamate-1-semialdehyde 2,1-aminomutase (432 aa).

K272 carries the post-translational modification N6-(pyridoxal phosphate)lysine.

This sequence belongs to the class-III pyridoxal-phosphate-dependent aminotransferase family. HemL subfamily. As to quaternary structure, homodimer. It depends on pyridoxal 5'-phosphate as a cofactor.

Its subcellular location is the cytoplasm. It catalyses the reaction (S)-4-amino-5-oxopentanoate = 5-aminolevulinate. It participates in porphyrin-containing compound metabolism; protoporphyrin-IX biosynthesis; 5-aminolevulinate from L-glutamyl-tRNA(Glu): step 2/2. The protein operates within porphyrin-containing compound metabolism; chlorophyll biosynthesis. This is Glutamate-1-semialdehyde 2,1-aminomutase from Nostoc punctiforme (strain ATCC 29133 / PCC 73102).